We begin with the raw amino-acid sequence, 386 residues long: F420 non-reducing hydrogenase II small subunit (386 aa).

Residues 1–51 (MVEMSTGMKNLTRTLESMDFLKMDRRTFMKAVSALGATAFLGTYQTEIVNA) constitute a signal peptide (tat-type signal). Positions 67, 70, 178, 227, 273, 276, 296, and 302 each coordinate [4Fe-4S] cluster. Positions 311, 330, and 333 each coordinate [3Fe-4S] cluster.

It belongs to the [NiFe]/[NiFeSe] hydrogenase small subunit family. In terms of assembly, composed of a large subunit (VhtA), a small subunit (VhtG) and a cytochrome subunit (VhtC). The cofactor is [4Fe-4S] cluster. It depends on [3Fe-4S] cluster as a cofactor. Post-translationally, predicted to be exported by the Tat system. The position of the signal peptide cleavage has not been experimentally proven.

The protein resides in the cell membrane. The enzyme catalyses methanophenazine + H2 = dihydromethanophenazine. Functionally, part of the F420 non-reducing hydrogenase II complex that catalyzes the reduction of methanophenazine to dihydromethanophenazine. The sequence is that of F420 non-reducing hydrogenase II small subunit from Methanosarcina mazei (strain ATCC BAA-159 / DSM 3647 / Goe1 / Go1 / JCM 11833 / OCM 88) (Methanosarcina frisia).